A 78-amino-acid polypeptide reads, in one-letter code: Putative antitoxin VapB4 (78 aa).

The protein belongs to the UPF0330 family.

Its function is as follows. Possibly the antitoxin component of a type II toxin-antitoxin (TA) system. Its cognate toxin is VapC4 (Potential). This is Putative antitoxin VapB4 (vapB4) from Pyrococcus furiosus (strain ATCC 43587 / DSM 3638 / JCM 8422 / Vc1).